A 116-amino-acid polypeptide reads, in one-letter code: Large ribosomal subunit protein bL17 (116 aa).

The protein belongs to the bacterial ribosomal protein bL17 family. In terms of assembly, part of the 50S ribosomal subunit. Contacts protein L32.

In Gloeothece citriformis (strain PCC 7424) (Cyanothece sp. (strain PCC 7424)), this protein is Large ribosomal subunit protein bL17.